The chain runs to 137 residues: Ribonuclease VapC18 (137 aa).

The PINc domain maps to 4-126 (CVDTSAWHHA…YDRVAAITGQ (123 aa)). Positions 6 and 96 each coordinate Mg(2+).

It belongs to the PINc/VapC protein family. The cofactor is Mg(2+).

Functionally, toxic component of a type II toxin-antitoxin (TA) system. An RNase. The cognate antitoxin is VapB18. The sequence is that of Ribonuclease VapC18 from Mycobacterium tuberculosis (strain ATCC 25618 / H37Rv).